The primary structure comprises 501 residues: Tegument protein US24 (501 aa).

The protein belongs to the herpesviridae US22 family.

The protein resides in the virion tegument. This is Tegument protein US24 (US24) from Human cytomegalovirus (strain AD169) (HHV-5).